Consider the following 677-residue polypeptide: Methionine--tRNA ligase (677 aa).

Positions 15-25 match the 'HIGH' region motif; the sequence is PYANGSIHLGH. Positions 146, 149, 159, and 162 each coordinate Zn(2+). The 'KMSKS' region signature appears at 333–337; the sequence is KMSKS. Lys336 contributes to the ATP binding site. The region spanning 575–677 is the tRNA-binding domain; that stretch reads DFAKVDLRVA…AGAKPGHQVK (103 aa).

It belongs to the class-I aminoacyl-tRNA synthetase family. MetG type 1 subfamily. Homodimer. Zn(2+) serves as cofactor.

The protein localises to the cytoplasm. The enzyme catalyses tRNA(Met) + L-methionine + ATP = L-methionyl-tRNA(Met) + AMP + diphosphate. In terms of biological role, is required not only for elongation of protein synthesis but also for the initiation of all mRNA translation through initiator tRNA(fMet) aminoacylation. The polypeptide is Methionine--tRNA ligase (Shigella flexneri serotype 5b (strain 8401)).